We begin with the raw amino-acid sequence, 317 residues long: Ribosomal RNA small subunit methyltransferase H (317 aa).

S-adenosyl-L-methionine contacts are provided by residues 34 to 36 (GGH), Asp-53, Phe-80, Asp-98, and Gln-105.

Belongs to the methyltransferase superfamily. RsmH family.

The protein resides in the cytoplasm. The enzyme catalyses cytidine(1402) in 16S rRNA + S-adenosyl-L-methionine = N(4)-methylcytidine(1402) in 16S rRNA + S-adenosyl-L-homocysteine + H(+). In terms of biological role, specifically methylates the N4 position of cytidine in position 1402 (C1402) of 16S rRNA. The protein is Ribosomal RNA small subunit methyltransferase H of Tropheryma whipplei (strain TW08/27) (Whipple's bacillus).